Reading from the N-terminus, the 255-residue chain is UPF0246 protein Caul_4480 (255 aa).

The protein belongs to the UPF0246 family.

This Caulobacter sp. (strain K31) protein is UPF0246 protein Caul_4480.